Consider the following 249-residue polypeptide: 2,3-bisphosphoglycerate-dependent phosphoglycerate mutase (249 aa).

Substrate contacts are provided by residues 9-16, 22-23, Arg61, 88-91, Lys99, 115-116, and 184-185; these read RHGESEWN, TG, ERHY, RR, and GN. Catalysis depends on His10, which acts as the Tele-phosphohistidine intermediate. Glu88 acts as the Proton donor/acceptor in catalysis.

Belongs to the phosphoglycerate mutase family. BPG-dependent PGAM subfamily.

The enzyme catalyses (2R)-2-phosphoglycerate = (2R)-3-phosphoglycerate. Its pathway is carbohydrate degradation; glycolysis; pyruvate from D-glyceraldehyde 3-phosphate: step 3/5. In terms of biological role, catalyzes the interconversion of 2-phosphoglycerate and 3-phosphoglycerate. In Cutibacterium acnes (strain DSM 16379 / KPA171202) (Propionibacterium acnes), this protein is 2,3-bisphosphoglycerate-dependent phosphoglycerate mutase.